A 285-amino-acid polypeptide reads, in one-letter code: Undecaprenyl-diphosphatase (285 aa).

7 helical membrane-spanning segments follow: residues 3 to 23 (ILLLVKAAIMGIVEGLTEFLP), 41 to 61 (GEIVKVFDIAIQTGAMFAVIW), 87 to 107 (LLIAFVPAVISGLALGGLIKE), 109 to 129 (LFHPVPVATAFVVGGLIILWV), 197 to 217 (TEFSFFLGIPTLMGAGAYSLI), 226 to 246 (GDLPVFAVGVVFAFLSALVCI), and 260 to 280 (VFAWYRIAFGGLVLLSAWGGW).

This sequence belongs to the UppP family.

It localises to the cell inner membrane. The enzyme catalyses di-trans,octa-cis-undecaprenyl diphosphate + H2O = di-trans,octa-cis-undecaprenyl phosphate + phosphate + H(+). In terms of biological role, catalyzes the dephosphorylation of undecaprenyl diphosphate (UPP). Confers resistance to bacitracin. This chain is Undecaprenyl-diphosphatase, found in Methylibium petroleiphilum (strain ATCC BAA-1232 / LMG 22953 / PM1).